The sequence spans 447 residues: 3-phosphoshikimate 1-carboxyvinyltransferase (447 aa).

3-phosphoshikimate contacts are provided by Lys-36, Ser-37, and Arg-41. Residue Lys-36 participates in phosphoenolpyruvate binding. Phosphoenolpyruvate contacts are provided by Gly-109 and Arg-138. 3-phosphoshikimate is bound by residues Ser-183, Gln-185, Asp-333, and Lys-360. Position 185 (Gln-185) interacts with phosphoenolpyruvate. The Proton acceptor role is filled by Asp-333. Phosphoenolpyruvate contacts are provided by Arg-364 and Arg-406.

The protein belongs to the EPSP synthase family. As to quaternary structure, monomer.

The protein localises to the cytoplasm. The enzyme catalyses 3-phosphoshikimate + phosphoenolpyruvate = 5-O-(1-carboxyvinyl)-3-phosphoshikimate + phosphate. Its pathway is metabolic intermediate biosynthesis; chorismate biosynthesis; chorismate from D-erythrose 4-phosphate and phosphoenolpyruvate: step 6/7. Functionally, catalyzes the transfer of the enolpyruvyl moiety of phosphoenolpyruvate (PEP) to the 5-hydroxyl of shikimate-3-phosphate (S3P) to produce enolpyruvyl shikimate-3-phosphate and inorganic phosphate. The sequence is that of 3-phosphoshikimate 1-carboxyvinyltransferase from Synechocystis sp. (strain ATCC 27184 / PCC 6803 / Kazusa).